A 1409-amino-acid polypeptide reads, in one-letter code: Protein three rows (1409 aa).

Residues 1052 to 1058 (VEPIRKQ) are separase cleavage-site. Disordered stretches follow at residues 1260-1284 (PIGC…SDHV) and 1297-1409 (DDAA…RQRN). Low complexity-rich tracts occupy residues 1264–1273 (SNSSSSSSKS) and 1300–1310 (ASVSASTPAPS).

Interacts with pim and Sse. Cleavage of thr contributes to inactivation of Sse.

The protein resides in the cytoplasm. Its function is as follows. Required specifically for chromosome disjunction during all mitoses; maternally provided protein is sufficient until mitosis 14 then zygotic protein is required. Involved in formation and/or maintenance of epithelial structures: bud extension during Malpighian tubule development, and foregut and hindgut morphogenesis. The polypeptide is Protein three rows (thr) (Drosophila pseudoobscura pseudoobscura (Fruit fly)).